Here is a 205-residue protein sequence, read N- to C-terminus: Cytochrome c biogenesis ATP-binding export protein CcmA (205 aa).

One can recognise an ABC transporter domain in the interval 2–204 (LEVSNLTAIR…SPKLRKIKLG (203 aa)). 34-41 (GRNGTGKT) lines the ATP pocket.

This sequence belongs to the ABC transporter superfamily. CcmA exporter (TC 3.A.1.107) family. The complex is composed of two ATP-binding proteins (CcmA) and two transmembrane proteins (CcmB).

Its subcellular location is the cell inner membrane. It carries out the reaction heme b(in) + ATP + H2O = heme b(out) + ADP + phosphate + H(+). Its function is as follows. Part of the ABC transporter complex CcmAB involved in the biogenesis of c-type cytochromes; once thought to export heme, this seems not to be the case, but its exact role is uncertain. Responsible for energy coupling to the transport system. This is Cytochrome c biogenesis ATP-binding export protein CcmA from Vibrio vulnificus (strain CMCP6).